The chain runs to 161 residues: Protein-export protein SecB (161 aa).

The protein belongs to the SecB family. Homotetramer, a dimer of dimers. One homotetramer interacts with 1 SecA dimer.

The protein resides in the cytoplasm. One of the proteins required for the normal export of preproteins out of the cell cytoplasm. It is a molecular chaperone that binds to a subset of precursor proteins, maintaining them in a translocation-competent state. It also specifically binds to its receptor SecA. The chain is Protein-export protein SecB from Shewanella putrefaciens (strain CN-32 / ATCC BAA-453).